Here is a 226-residue protein sequence, read N- to C-terminus: UPF0173 metal-dependent hydrolase GTNG_2675 (226 aa).

It belongs to the UPF0173 family.

This chain is UPF0173 metal-dependent hydrolase GTNG_2675, found in Geobacillus thermodenitrificans (strain NG80-2).